An 835-amino-acid chain; its full sequence is Leucine--tRNA ligase (835 aa).

The 'HIGH' region motif lies at 36-46; it reads PYPSGKIHVGH. The 'KMSKS' region motif lies at 602–606; sequence KMSKS. Lys-605 lines the ATP pocket.

This sequence belongs to the class-I aminoacyl-tRNA synthetase family.

The protein localises to the cytoplasm. The enzyme catalyses tRNA(Leu) + L-leucine + ATP = L-leucyl-tRNA(Leu) + AMP + diphosphate. In Rickettsia africae (strain ESF-5), this protein is Leucine--tRNA ligase.